The following is a 670-amino-acid chain: Solute carrier organic anion transporter family member 1A4 (670 aa).

At 1–20 (MGKSEKEVATHGVRCFSKIK) the chain is on the cytoplasmic side. A helical transmembrane segment spans residues 21-40 (AFLLALTCAYVSKSLSGTYM). Over 41 to 59 (NSMLTQIERQFGIPTSVVG) the chain is Extracellular. Residues 60–80 (LINGSFEIGNLLLIIFVSYFG) form a helical membrane-spanning segment. The Cytoplasmic segment spans residues 81–86 (TKLHRP). Residues 87-111 (IMIGVGCAVMGLGCFLISIPHFLMG) form a helical membrane-spanning segment. Topologically, residues 112–155 (RYEYETTILPTSNLSSNSFVCTENRTQTLKPTQDPTECVKEMKS) are extracellular. Residues Asn-124 and Asn-135 are each glycosylated (N-linked (GlcNAc...) asparagine). Residues 156–184 (LMWIYVLVGNIIRGMGETPIMPLGISYIE) form a helical membrane-spanning segment. Residues 185–203 (DFAKSENSPLYIGILETGM) lie on the Cytoplasmic side of the membrane. The chain crosses the membrane as a helical span at residues 204–224 (TIGPLIGLLLGSSCANIYVDT). The Extracellular segment spans residues 225-242 (GSVNTDDLTITPTDTRWV). Residues 243–267 (GAWWIGFLVCAGVNILTSIPFFFFP) form a helical membrane-spanning segment. At 268–311 (KTLLKEGLQDNGDGTENAKEEKHREKIKEENRGITKDFFLFMKS) the chain is on the cytoplasmic side. The helical transmembrane segment at 312-333 (LSCNPIYMIFILISVIQVNAFI) threads the bilayer. Over 334 to 353 (NSFTFMPKYLEQQYGKSTAE) the chain is Extracellular. The helical transmembrane segment at 354–377 (IVFLMGLYMLPPICLGYLIGGLIM) threads the bilayer. The Cytoplasmic portion of the chain corresponds to 378–381 (KKFK). The chain crosses the membrane as a helical span at residues 382–405 (ITVKKAAYIGFWLSLTEYLLSFVS). Topologically, residues 406 to 513 (YIMTCDNFPV…PECANKLQYF (108 aa)) are extracellular. The Kazal-like domain occupies 433-488 (NNVLADCNTKCSCLTNTWDPVCGDNGLSYMSACLAGCEKSVGTGTNMVFQNCSCIQ). 3 disulfide bridges follow: Cys-439/Cys-469, Cys-445/Cys-465, and Cys-454/Cys-486. Asn-483 and Asn-492 each carry an N-linked (GlcNAc...) asparagine glycan. The helical transmembrane segment at 514–536 (LIISIIGCFIFSLGAIPGYMVLL) threads the bilayer. Topologically, residues 537-545 (RCMKSEEKS) are cytoplasmic. The chain crosses the membrane as a helical span at residues 546–571 (LGVGLHTFCMRILGGIPAPIYFGALI). At 572 to 605 (DRTCLHWGTLKCGEPGACRMYDINSFRRIYLGLP) the chain is on the extracellular side. The chain crosses the membrane as a helical span at residues 606 to 623 (AALRGASFLPALFILILM). Residues 624-670 (RKFQFPGDIDSSDTDPAEMKLTAKESKCTNVHRSPTMQNDGERKTKL) are Cytoplasmic-facing. Ser-634 and Ser-635 each carry phosphoserine. Residues 649–670 (SKCTNVHRSPTMQNDGERKTKL) are disordered. Over residues 651 to 662 (CTNVHRSPTMQN) the composition is skewed to polar residues.

It belongs to the organo anion transporter (TC 2.A.60) family. Highly expressed in brain and liver. Detected at very low levels in heart and lung.

The protein localises to the cell membrane. The catalysed reaction is estrone 3-sulfate(out) = estrone 3-sulfate(in). The enzyme catalyses taurocholate(out) = taurocholate(in). It catalyses the reaction prostaglandin E2(out) = prostaglandin E2(in). It carries out the reaction L-thyroxine(out) = L-thyroxine(in). Its function is as follows. Mediates the Na(+)-independent transport of organic anions such as taurocholate, cholate, 17-beta-glucuronosyl estradiol, prostaglandin E2, estrone 3-sulfate, L-thyroxine (T4), the cardiac glycosides ouabain and digoxin and thyroid hormones. Shows a pH-sensitive substrate specificity which may be ascribed to the protonation state of the binding site and leads to a stimulation of substrate transport in an acidic microenvironment. Hydrogencarbonate/HCO3(-) acts as the probable counteranion that exchanges for organic anions. This chain is Solute carrier organic anion transporter family member 1A4 (Slco1a4), found in Mus musculus (Mouse).